The sequence spans 350 residues: Nicotinate-nucleotide--dimethylbenzimidazole phosphoribosyltransferase (350 aa).

Catalysis depends on Glu-316, which acts as the Proton acceptor.

This sequence belongs to the CobT family.

The catalysed reaction is 5,6-dimethylbenzimidazole + nicotinate beta-D-ribonucleotide = alpha-ribazole 5'-phosphate + nicotinate + H(+). It participates in nucleoside biosynthesis; alpha-ribazole biosynthesis; alpha-ribazole from 5,6-dimethylbenzimidazole: step 1/2. Catalyzes the synthesis of alpha-ribazole-5'-phosphate from nicotinate mononucleotide (NAMN) and 5,6-dimethylbenzimidazole (DMB). The chain is Nicotinate-nucleotide--dimethylbenzimidazole phosphoribosyltransferase from Pseudomonas syringae pv. syringae (strain B728a).